Here is a 130-residue protein sequence, read N- to C-terminus: U-scoloptoxin(16)-Er4a (130 aa).

The N-terminal stretch at 1 to 26 is a signal peptide; the sequence is MNTVSVVQFLAVGCAVFVLYGRGVFA.

Belongs to the scoloptoxin-16 family. Post-translationally, contains 3 disulfide bonds. Expressed by the venom gland.

The protein localises to the secreted. In Ethmostigmus rubripes (Giant centipede), this protein is U-scoloptoxin(16)-Er4a.